A 241-amino-acid polypeptide reads, in one-letter code: Orotidine 5'-phosphate decarboxylase (241 aa).

Residues D16, K37, 64–73 (DLKFHDIPTT), T128, R190, Q199, G219, and R220 each bind substrate. Catalysis depends on K66, which acts as the Proton donor.

Belongs to the OMP decarboxylase family. Type 1 subfamily. Homodimer.

It carries out the reaction orotidine 5'-phosphate + H(+) = UMP + CO2. The protein operates within pyrimidine metabolism; UMP biosynthesis via de novo pathway; UMP from orotate: step 2/2. In terms of biological role, catalyzes the decarboxylation of orotidine 5'-monophosphate (OMP) to uridine 5'-monophosphate (UMP). In Prochlorococcus marinus (strain NATL2A), this protein is Orotidine 5'-phosphate decarboxylase.